A 384-amino-acid chain; its full sequence is Eukaryotic translation initiation factor 3 subunit M (384 aa).

The 163-residue stretch at 184 to 346 (ENRKAIEAMI…KKILITGAFP (163 aa)) folds into the PCI domain.

Belongs to the eIF-3 subunit M family. Component of the eukaryotic translation initiation factor 3 (eIF-3) complex.

The protein localises to the cytoplasm. Functionally, component of the eukaryotic translation initiation factor 3 (eIF-3) complex, which is involved in protein synthesis of a specialized repertoire of mRNAs and, together with other initiation factors, stimulates binding of mRNA and methionyl-tRNAi to the 40S ribosome. The eIF-3 complex specifically targets and initiates translation of a subset of mRNAs involved in cell proliferation. This chain is Eukaryotic translation initiation factor 3 subunit M, found in Schistosoma japonicum (Blood fluke).